Here is a 147-residue protein sequence, read N- to C-terminus: Lysozyme C (147 aa).

The N-terminal stretch at 1–18 (MKFFLILGFCLLPLIAQG) is a signal peptide. Residues 19-147 (KVFQRCELAA…VSQWIRGCRV (129 aa)) enclose the C-type lysozyme domain. Disulfide bonds link Cys-24-Cys-145, Cys-48-Cys-133, Cys-82-Cys-98, and Cys-94-Cys-112. Catalysis depends on residues Glu-53 and Asp-70. Position 119 (Asp-119) interacts with substrate.

It belongs to the glycosyl hydrolase 22 family. In terms of assembly, monomer. In terms of tissue distribution, expressed in liver and ovary. Not expressed in bone marrow, lung, spleen, intestine or oviduct.

Its subcellular location is the secreted. The catalysed reaction is Hydrolysis of (1-&gt;4)-beta-linkages between N-acetylmuramic acid and N-acetyl-D-glucosamine residues in a peptidoglycan and between N-acetyl-D-glucosamine residues in chitodextrins.. Functionally, lysozymes have primarily a bacteriolytic function; those in tissues and body fluids are associated with the monocyte-macrophage system and enhance the activity of immunoagents. Has bacteriolytic activity against M.luteus. This Dromaius novaehollandiae (Emu) protein is Lysozyme C.